The primary structure comprises 78 residues: Putative membrane protein insertion efficiency factor (78 aa).

This sequence belongs to the UPF0161 family.

The protein localises to the cell membrane. Its function is as follows. Could be involved in insertion of integral membrane proteins into the membrane. The chain is Putative membrane protein insertion efficiency factor from Bacillus mycoides (strain KBAB4) (Bacillus weihenstephanensis).